The chain runs to 134 residues: Phosphoribosyl-ATP pyrophosphatase (134 aa).

The protein belongs to the PRA-PH family.

The protein localises to the cytoplasm. The catalysed reaction is 1-(5-phospho-beta-D-ribosyl)-ATP + H2O = 1-(5-phospho-beta-D-ribosyl)-5'-AMP + diphosphate + H(+). The protein operates within amino-acid biosynthesis; L-histidine biosynthesis; L-histidine from 5-phospho-alpha-D-ribose 1-diphosphate: step 2/9. The protein is Phosphoribosyl-ATP pyrophosphatase of Verminephrobacter eiseniae (strain EF01-2).